The chain runs to 1236 residues: DNA-directed RNA polymerase subunit beta (1236 aa).

Residues 1185–1236 (IEGSEDYTEPKQPNDNYLEEEENKDKESDYDEDLNFDDLTKGLQLDDFNDEH) form a disordered region. Over residues 1201–1220 (YLEEEENKDKESDYDEDLNF) the composition is skewed to acidic residues.

The protein belongs to the RNA polymerase beta chain family. In terms of assembly, the RNAP catalytic core consists of 2 alpha, 1 beta, 1 beta' and 1 omega subunit. When a sigma factor is associated with the core the holoenzyme is formed, which can initiate transcription.

It carries out the reaction RNA(n) + a ribonucleoside 5'-triphosphate = RNA(n+1) + diphosphate. DNA-dependent RNA polymerase catalyzes the transcription of DNA into RNA using the four ribonucleoside triphosphates as substrates. This is DNA-directed RNA polymerase subunit beta from Clostridium tetani (strain Massachusetts / E88).